A 428-amino-acid chain; its full sequence is MSNVVVMGAQWGDEGKGKIVDLLTRKCDVIVRFQGGNNAGHTVLVGDKQYILHLIPSGILHPGKKCLIGNGVVLDPAVFCREVETLRDKDVDVSPARLMISRKAHVIMPYHKALDVARECHKTNESKIGTTGRGIGPCYEDKMSRIGIRAADLAMPELLRAKIEAALLEKNALLAGLYGGETMTVDAVFDEVMAVAPRVVPHLADVTAEIEAAWAAGQHVMFEGAQGTHLDIDHGTYPFVTSSNTVSGNASAGSGIAPTRLDRIVAIVKAYTTRVGAGPFPTEQLNEAGDYLQQKGHEFGATTGRKRRCGWLDAVVLREAVRLNGPTDIALTKLDVLSGLKELKICTAYEYQGGTITVAPQEQNGMAHVTPVYETMPGWDDDITGCTTWESLPAPTRAYIARIEELTGVRVSLVSVGPERDQTINRGW.

GTP contacts are provided by residues 12 to 18 (GDEGKGK) and 40 to 42 (GHT). Asp13 acts as the Proton acceptor in catalysis. Mg(2+) contacts are provided by Asp13 and Gly40. Residues 13–16 (DEGK), 38–41 (NAGH), Thr131, Arg145, Gln226, Thr241, and Arg305 contribute to the IMP site. The Proton donor role is filled by His41. 301-307 (ATTGRKR) lines the substrate pocket. Residues Arg307, 333 to 335 (KLD), and 415 to 417 (SVG) contribute to the GTP site.

This sequence belongs to the adenylosuccinate synthetase family. As to quaternary structure, homodimer. The cofactor is Mg(2+).

The protein localises to the cytoplasm. It catalyses the reaction IMP + L-aspartate + GTP = N(6)-(1,2-dicarboxyethyl)-AMP + GDP + phosphate + 2 H(+). Its pathway is purine metabolism; AMP biosynthesis via de novo pathway; AMP from IMP: step 1/2. Plays an important role in the de novo pathway of purine nucleotide biosynthesis. Catalyzes the first committed step in the biosynthesis of AMP from IMP. The protein is Adenylosuccinate synthetase of Nitratidesulfovibrio vulgaris (strain DSM 19637 / Miyazaki F) (Desulfovibrio vulgaris).